The following is a 519-amino-acid chain: GTPase Der (519 aa).

2 stretches are compositionally biased toward acidic residues: residues 1–12 and 30–54; these read MDVEGAFADEEE and GYED…PDFG. The interval 1-54 is disordered; sequence MDVEGAFADEEELAPHGGWASADFDPAEFGYEDSDDDFDAEDFDETEFSNPDFG. EngA-type G domains lie at 81-244 and 254-427; these read CTVA…PEEP and RRVA…DNWD. Residues 87–94, 134–138, 196–199, 260–267, 307–311, and 372–375 contribute to the GTP site; these read GRPNVGKS, DTGGW, NKFD, GKPNVGKS, DTAGL, and NKWD. Residues 428–510 form the KH-like domain; the sequence is RRISTGQLNT…PVRIAVRVRE (83 aa).

Belongs to the TRAFAC class TrmE-Era-EngA-EngB-Septin-like GTPase superfamily. EngA (Der) GTPase family. Associates with the 50S ribosomal subunit.

In terms of biological role, GTPase that plays an essential role in the late steps of ribosome biogenesis. The polypeptide is GTPase Der (Corynebacterium glutamicum (strain ATCC 13032 / DSM 20300 / JCM 1318 / BCRC 11384 / CCUG 27702 / LMG 3730 / NBRC 12168 / NCIMB 10025 / NRRL B-2784 / 534)).